A 205-amino-acid polypeptide reads, in one-letter code: Holliday junction branch migration complex subunit RuvA (205 aa).

Residues 1-64 (MIGKLKGVVD…EDMIRLYGFR (64 aa)) are domain I. A domain II region spans residues 65-143 (SDAEREWFRL…AFAPVDPALV (79 aa)). The flexible linker stretch occupies residues 144–152 (ALAGAVEEG). Residues 153–205 (AAPQPVADAVSALVNLGYPQVQAAAAIAAALKGAGEGAEAKVLIRLGLRELAR) are domain III.

This sequence belongs to the RuvA family. As to quaternary structure, homotetramer. Forms an RuvA(8)-RuvB(12)-Holliday junction (HJ) complex. HJ DNA is sandwiched between 2 RuvA tetramers; dsDNA enters through RuvA and exits via RuvB. An RuvB hexamer assembles on each DNA strand where it exits the tetramer. Each RuvB hexamer is contacted by two RuvA subunits (via domain III) on 2 adjacent RuvB subunits; this complex drives branch migration. In the full resolvosome a probable DNA-RuvA(4)-RuvB(12)-RuvC(2) complex forms which resolves the HJ.

The protein localises to the cytoplasm. The RuvA-RuvB-RuvC complex processes Holliday junction (HJ) DNA during genetic recombination and DNA repair, while the RuvA-RuvB complex plays an important role in the rescue of blocked DNA replication forks via replication fork reversal (RFR). RuvA specifically binds to HJ cruciform DNA, conferring on it an open structure. The RuvB hexamer acts as an ATP-dependent pump, pulling dsDNA into and through the RuvAB complex. HJ branch migration allows RuvC to scan DNA until it finds its consensus sequence, where it cleaves and resolves the cruciform DNA. This chain is Holliday junction branch migration complex subunit RuvA, found in Methylobacterium radiotolerans (strain ATCC 27329 / DSM 1819 / JCM 2831 / NBRC 15690 / NCIMB 10815 / 0-1).